Here is a 429-residue protein sequence, read N- to C-terminus: RNA-binding protein BRN2 (429 aa).

3 consecutive RRM domains span residues 12-93 (VKLF…YADG), 100-180 (HKLF…WADT), and 330-408 (ANLF…LKRD). The disordered stretch occupies residues 410–429 (GQQQQQQQSKNPLFNGLLNS). Positions 418–429 (SKNPLFNGLLNS) are enriched in polar residues.

Expressed in roots, stems, flowers and siliques.

Its subcellular location is the cytoplasm. Functionally, RNA-binding protein involved in the regulation of flowering time. Acts as a repressor of the activity of SOC1, a transcriptional activator of flowering time. Binds to the 3'-UTR of SOC1 mRNA in the cytoplasm and participates in SOC1 mRNA decay, mediated by the distal region of the SOC1 3'-UTR. The chain is RNA-binding protein BRN2 from Arabidopsis thaliana (Mouse-ear cress).